The primary structure comprises 266 residues: Large ribosomal subunit protein eL8 (266 aa).

Residues Lys11, Lys20, and Lys21 each participate in a glycyl lysine isopeptide (Lys-Gly) (interchain with G-Cter in SUMO2) cross-link. Residue Lys34 is modified to N6-acetyllysine. Residue Lys48 forms a Glycyl lysine isopeptide (Lys-Gly) (interchain with G-Cter in SUMO2) linkage. At Lys97 the chain carries N6-acetyllysine; alternate. Lys97 is covalently cross-linked (Glycyl lysine isopeptide (Lys-Gly) (interchain with G-Cter in SUMO2); alternate). A Glycyl lysine isopeptide (Lys-Gly) (interchain with G-Cter in SUMO2) cross-link involves residue Lys125. N6-acetyllysine is present on Lys217. A Glycyl lysine isopeptide (Lys-Gly) (interchain with G-Cter in SUMO2) cross-link involves residue Lys245.

Belongs to the eukaryotic ribosomal protein eL8 family. In terms of assembly, component of the large ribosomal subunit. Interacts with CRY1. Interacts with DICER1, AGO2, TARBP2, MOV10 and EIF6; they form a large RNA-induced silencing complex (RISC).

Its subcellular location is the cytoplasm. In terms of biological role, component of the large ribosomal subunit. The ribosome is a large ribonucleoprotein complex responsible for the synthesis of proteins in the cell. This is Large ribosomal subunit protein eL8 (Rpl7a) from Rattus norvegicus (Rat).